A 295-amino-acid chain; its full sequence is MSEAQSELQASLLAKALPYMQRYENKTIVVKYGGHAMGNAELGKAFAADIALLKQSGVNPIVVHGGGPQIGAMLTKMGIESKFEGGLRVTDQKTVEIVEMVLAGSINKEIVALINQTGEWAIGLCGKDGNMVFAEKAHKTIKDPDSNIERVLDLGFVGEVVEVDRTLLDLLAKSEMIPVIAPVAPGRDGATYNINADTFAGAIAGALSATRLLFLTDVPGVLDKQGQLIKELSVAQAHALIADGTISGGMIPKVETCIDAIKAGVQGVVILNGKTAHSVLLEIFTEHGAGTLIVP.

Substrate-binding positions include glycine 66–glycine 67, arginine 88, and asparagine 193.

Belongs to the acetylglutamate kinase family. ArgB subfamily.

It localises to the cytoplasm. The catalysed reaction is N-acetyl-L-glutamate + ATP = N-acetyl-L-glutamyl 5-phosphate + ADP. The protein operates within amino-acid biosynthesis; L-arginine biosynthesis; N(2)-acetyl-L-ornithine from L-glutamate: step 2/4. Catalyzes the ATP-dependent phosphorylation of N-acetyl-L-glutamate. In Rhizobium rhizogenes (strain K84 / ATCC BAA-868) (Agrobacterium radiobacter), this protein is Acetylglutamate kinase.